A 94-amino-acid polypeptide reads, in one-letter code: Cyclin-dependent kinases regulatory subunit (94 aa).

This sequence belongs to the CKS family. As to quaternary structure, forms a homohexamer that can probably bind six kinase subunits. Interacts with cdk-1.

It is found in the nucleus. Functionally, binds to the catalytic subunit of the cyclin dependent kinases and is essential for their biological function. Has a role in the exit from M phase during early mitotic cell division. More specifically, thought to act by the degrading B-type cyclins that causes breakdown of nuclear envelope and exit mitosis. The polypeptide is Cyclin-dependent kinases regulatory subunit (Caenorhabditis briggsae).